Reading from the N-terminus, the 276-residue chain is NADH-cytochrome b5 reductase 2 (276 aa).

Residues 15–127 (EAKYPLPLIE…RGPTGRLFYN (113 aa)) enclose the FAD-binding FR-type domain. The residue at position 17 (lysine 17) is an N6-acetyllysine. Position 18 is a phosphotyrosine (tyrosine 18). Residues 107-137 (ENMK…IKTD) and 146-181 (LVHH…RMSL) each bind FAD.

Belongs to the flavoprotein pyridine nucleotide cytochrome reductase family. It depends on FAD as a cofactor.

The enzyme catalyses 2 Fe(III)-[cytochrome b5] + NADH = 2 Fe(II)-[cytochrome b5] + NAD(+) + H(+). Functionally, NADH-cytochrome b5 reductases are involved in desaturation and elongation of fatty acids, cholesterol biosynthesis, drug metabolism, and, in erythrocyte, methemoglobin reduction. Responsible for NADH-dependent lucigenin chemiluminescence in spermatozoa by reducing both lucigenin and 2-[4-iodophenyl]-3-[4-nitrophenyl]-5-[2,4-disulfophenyl]-2H tetrazolium monosodium salt (WST-1). This chain is NADH-cytochrome b5 reductase 2 (Cyb5r2), found in Rattus norvegicus (Rat).